The primary structure comprises 484 residues: Trigger factor (484 aa).

A PPIase FKBP-type domain is found at glycine 165–proline 244. Residues aspartate 429 to glutamate 484 are disordered. The segment covering alanine 430–alanine 440 has biased composition (acidic residues). Basic and acidic residues predominate over residues lysine 475–glutamate 484.

The protein belongs to the FKBP-type PPIase family. Tig subfamily.

It is found in the cytoplasm. The catalysed reaction is [protein]-peptidylproline (omega=180) = [protein]-peptidylproline (omega=0). Functionally, involved in protein export. Acts as a chaperone by maintaining the newly synthesized protein in an open conformation. Functions as a peptidyl-prolyl cis-trans isomerase. The sequence is that of Trigger factor from Clavibacter michiganensis subsp. michiganensis (strain NCPPB 382).